The sequence spans 540 residues: Alanine aminotransferase 2, mitochondrial (540 aa).

A mitochondrion-targeting transit peptide spans 1–46 (MRRFLINQAKGLVDHSRRQHHHKSPSFLSPQPRPLASSPPALSRFF). Positions 11–40 (GLVDHSRRQHHHKSPSFLSPQPRPLASSPP) are disordered. Over residues 28-40 (LSPQPRPLASSPP) the composition is skewed to low complexity. The residue at position 357 (Lys-357) is an N6-(pyridoxal phosphate)lysine.

It belongs to the class-I pyridoxal-phosphate-dependent aminotransferase family. Alanine aminotransferase subfamily. As to quaternary structure, homodimer. Pyridoxal 5'-phosphate serves as cofactor. In terms of processing, the N-terminus is blocked. In terms of tissue distribution, expressed in shoots, essentially in leaves and flowers, mostly in vascular tissues. Also detected in stems and roots.

It is found in the mitochondrion. The catalysed reaction is L-alanine + 2-oxoglutarate = pyruvate + L-glutamate. It participates in photosynthesis; C4 acid pathway. The protein operates within amino-acid degradation; L-alanine degradation via transaminase pathway; pyruvate from L-alanine: step 1/1. The chain is Alanine aminotransferase 2, mitochondrial (ALAAT2) from Arabidopsis thaliana (Mouse-ear cress).